The sequence spans 224 residues: Protein GrpE (224 aa).

Residues 27 to 77 (NQASEDIDQENQSEVVDDTTENEDASEEVYEEDTASEDGSKEKKSFFKKKE) form a disordered region. Residues 31–62 (EDIDQENQSEVVDDTTENEDASEEVYEEDTAS) show a composition bias toward acidic residues.

It belongs to the GrpE family. In terms of assembly, homodimer.

The protein localises to the cytoplasm. Participates actively in the response to hyperosmotic and heat shock by preventing the aggregation of stress-denatured proteins, in association with DnaK and GrpE. It is the nucleotide exchange factor for DnaK and may function as a thermosensor. Unfolded proteins bind initially to DnaJ; upon interaction with the DnaJ-bound protein, DnaK hydrolyzes its bound ATP, resulting in the formation of a stable complex. GrpE releases ADP from DnaK; ATP binding to DnaK triggers the release of the substrate protein, thus completing the reaction cycle. Several rounds of ATP-dependent interactions between DnaJ, DnaK and GrpE are required for fully efficient folding. The chain is Protein GrpE from Lachnoclostridium phytofermentans (strain ATCC 700394 / DSM 18823 / ISDg) (Clostridium phytofermentans).